The primary structure comprises 356 residues: Probable arabinogalactan endo-beta-1,4-galactanase A (356 aa).

The N-terminal stretch at 1-21 (MLGKTVLLPLLVLLCHSLASA) is a signal peptide. N-linked (GlcNAc...) asparagine glycosylation occurs at Asn133. The active-site Proton donor is Glu157. Glu268 acts as the Nucleophile in catalysis.

It belongs to the glycosyl hydrolase 53 family.

It is found in the secreted. The catalysed reaction is The enzyme specifically hydrolyzes (1-&gt;4)-beta-D-galactosidic linkages in type I arabinogalactans.. In terms of biological role, endogalactanase involved in the degradation of plant cell wall polysaccharides, and more particularly of hairy regions of pectin. The polypeptide is Probable arabinogalactan endo-beta-1,4-galactanase A (galA) (Aspergillus fumigatus (strain CBS 144.89 / FGSC A1163 / CEA10) (Neosartorya fumigata)).